The primary structure comprises 65 residues: Period circadian protein (65 aa).

A disordered region spans residues 1-65; that stretch reads EGSGGSGSSG…VTLTESLLNK (65 aa). The span at 18 to 28 shows a compositional bias: polar residues; that stretch reads VRMSSVTNTSN. The span at 29–38 shows a compositional bias: low complexity; the sequence is AGTGTSAGDN. Residues 56–65 are compositionally biased toward polar residues; that stretch reads VTLTESLLNK.

As to quaternary structure, forms a heterodimer with timeless (TIM); the complex then translocates into the nucleus. In terms of processing, phosphorylated with a circadian rhythmicity, probably by the double-time protein (dbt). Phosphorylation could be implicated in the stability of per monomer and in the formation of heterodimer per-tim.

Its subcellular location is the nucleus. It is found in the cytoplasm. The protein localises to the perinuclear region. Essential for biological clock functions. Determines the period length of circadian and ultradian rhythms; an increase in PER dosage leads to shortened circadian rhythms and a decrease leads to lengthened circadian rhythms. Essential for the circadian rhythmicity of locomotor activity, eclosion behavior, and for the rhythmic component of the male courtship song that originates in the thoracic nervous system. The biological cycle depends on the rhythmic formation and nuclear localization of the TIM-PER complex. Light induces the degradation of TIM, which promotes elimination of PER. Nuclear activity of the heterodimer coordinatively regulates PER and TIM transcription through a negative feedback loop. Behaves as a negative element in circadian transcriptional loop. Does not appear to bind DNA, suggesting indirect transcriptional inhibition. The chain is Period circadian protein (per) from Drosophila mojavensis (Fruit fly).